The following is a 282-amino-acid chain: 3-methyl-2-oxobutanoate hydroxymethyltransferase (282 aa).

Mg(2+) is bound by residues D44 and D83. Residues 44–45 (DS), D83, and K112 each bind 3-methyl-2-oxobutanoate. Mg(2+) is bound at residue E114. Residue E181 is the Proton acceptor of the active site.

Belongs to the PanB family. As to quaternary structure, homodecamer; pentamer of dimers. Requires Mg(2+) as cofactor.

The protein localises to the cytoplasm. It carries out the reaction 3-methyl-2-oxobutanoate + (6R)-5,10-methylene-5,6,7,8-tetrahydrofolate + H2O = 2-dehydropantoate + (6S)-5,6,7,8-tetrahydrofolate. Its pathway is cofactor biosynthesis; coenzyme A biosynthesis. In terms of biological role, catalyzes the reversible reaction in which hydroxymethyl group from 5,10-methylenetetrahydrofolate is transferred onto alpha-ketoisovalerate to form ketopantoate. This is 3-methyl-2-oxobutanoate hydroxymethyltransferase from Pyrococcus abyssi (strain GE5 / Orsay).